The primary structure comprises 369 residues: Ubiquinone biosynthesis protein COQ4, mitochondrial (369 aa).

The N-terminal 28 residues, 1–28, are a transit peptide targeting the mitochondrion; that stretch reads MTSILGSARPLIQVGPKSRNASTSMSRL. The segment at 1-70 is disordered; that stretch reads MTSILGSARP…NPTNASRHPR (70 aa). Composition is skewed to polar residues over residues 19–33 and 47–66; these read RNASTSMSRLPSFPT and YATISPTAPRSSQRNPTNAS. 4 residues coordinate Zn(2+): His-198, Asp-199, His-202, and Glu-214. The tract at residues 330–369 is disordered; that stretch reads FSGRAKKGGKRRGWPSKILEHQKAQHQQQQQQQKVDESRN. The span at 332–343 shows a compositional bias: basic residues; it reads GRAKKGGKRRGW.

This sequence belongs to the COQ4 family. As to quaternary structure, component of a multi-subunit COQ enzyme complex, composed of at least COQ3, COQ4, COQ5, COQ6, COQ7 and COQ9. It depends on Zn(2+) as a cofactor.

Its subcellular location is the mitochondrion inner membrane. The catalysed reaction is a 4-hydroxy-3-methoxy-5-(all-trans-polyprenyl)benzoate + H(+) = a 2-methoxy-6-(all-trans-polyprenyl)phenol + CO2. It functions in the pathway cofactor biosynthesis; ubiquinone biosynthesis. Functionally, lyase that catalyzes the C1-decarboxylation of 4-hydroxy-3-methoxy-5-(all-trans-polyprenyl)benzoic acid into 2-methoxy-6-(all-trans-polyprenyl)phenol during ubiquinone biosynthesis. The chain is Ubiquinone biosynthesis protein COQ4, mitochondrial from Mycosarcoma maydis (Corn smut fungus).